Here is an 81-residue protein sequence, read N- to C-terminus: Anaphase-promoting complex subunit emb-1 (81 aa).

In terms of assembly, the APC/C is probably composed of at least 12 subunits: apc-2, apc-10, apc-11, cdc-26, emb-1, emb-27, emb-30, mat-1, mat-2, mat-3, such-1 and gfi-3. Expressed in germ cells.

It functions in the pathway protein modification; protein ubiquitination. Probable component of the anaphase promoting complex/cyclosome (APC/C), a cell cycle-regulated E3 ubiquitin ligase that controls progression through mitosis and the G1 phase of the cell cycle. The APC/C complex acts by mediating ubiquitination and subsequent degradation of target proteins. Developmental role in early embryogenesis and the metaphase to anaphase transition in meiosis and mitosis. May be required for germline proliferation. Required for male tail development and hermaphrodite vulva formation. The sequence is that of Anaphase-promoting complex subunit emb-1 from Caenorhabditis elegans.